The sequence spans 77 residues: Secapin (77 aa).

A signal peptide spans 1–32 (MKNYSKNATYLITVLLFSFVAMLLIIPSKCEA). Residues 33 to 52 (VSNDMQPLEARSADLVPEPR) constitute a propeptide that is removed on maturation. A disulfide bond links C61 and C72.

This sequence belongs to the secapin family. As to expression, expressed by the venom gland.

The protein localises to the secreted. Nontoxic peptide. The polypeptide is Secapin (Vespa magnifica (Hornet)).